A 416-amino-acid polypeptide reads, in one-letter code: Phosphoribosylamine--glycine ligase (416 aa).

In terms of domain architecture, ATP-grasp spans 107–313 (KDFMKKYNVK…FVDLINAAMD (207 aa)). An ATP-binding site is contributed by 133 to 194 (LKKCTYPIVI…EEYLEGVEAS (62 aa)). Mg(2+)-binding residues include Glu283 and Asn285.

The protein belongs to the GARS family. It depends on Mg(2+) as a cofactor. Mn(2+) is required as a cofactor.

It catalyses the reaction 5-phospho-beta-D-ribosylamine + glycine + ATP = N(1)-(5-phospho-beta-D-ribosyl)glycinamide + ADP + phosphate + H(+). It functions in the pathway purine metabolism; IMP biosynthesis via de novo pathway; N(1)-(5-phospho-D-ribosyl)glycinamide from 5-phospho-alpha-D-ribose 1-diphosphate: step 2/2. The chain is Phosphoribosylamine--glycine ligase from Clostridium acetobutylicum (strain ATCC 824 / DSM 792 / JCM 1419 / IAM 19013 / LMG 5710 / NBRC 13948 / NRRL B-527 / VKM B-1787 / 2291 / W).